A 339-amino-acid polypeptide reads, in one-letter code: RNA 3'-terminal phosphate cyclase (339 aa).

Residues Asp109 and 286-290 (HLADQ) each bind ATP. His310 serves as the catalytic Tele-AMP-histidine intermediate.

It belongs to the RNA 3'-terminal cyclase family. Type 1 subfamily.

It is found in the cytoplasm. The enzyme catalyses a 3'-end 3'-phospho-ribonucleotide-RNA + ATP = a 3'-end 2',3'-cyclophospho-ribonucleotide-RNA + AMP + diphosphate. Its function is as follows. Catalyzes the conversion of 3'-phosphate to a 2',3'-cyclic phosphodiester at the end of RNA. The mechanism of action of the enzyme occurs in 3 steps: (A) adenylation of the enzyme by ATP; (B) transfer of adenylate to an RNA-N3'P to produce RNA-N3'PP5'A; (C) and attack of the adjacent 2'-hydroxyl on the 3'-phosphorus in the diester linkage to produce the cyclic end product. The biological role of this enzyme is unknown but it is likely to function in some aspects of cellular RNA processing. The protein is RNA 3'-terminal phosphate cyclase of Halobacterium salinarum (strain ATCC 29341 / DSM 671 / R1).